An 87-amino-acid polypeptide reads, in one-letter code: Small ribosomal subunit protein uS17 (87 aa).

This sequence belongs to the universal ribosomal protein uS17 family. In terms of assembly, part of the 30S ribosomal subunit.

Its function is as follows. One of the primary rRNA binding proteins, it binds specifically to the 5'-end of 16S ribosomal RNA. In Anoxybacillus flavithermus (strain DSM 21510 / WK1), this protein is Small ribosomal subunit protein uS17.